The chain runs to 159 residues: SsrA-binding protein (159 aa).

It belongs to the SmpB family.

The protein localises to the cytoplasm. In terms of biological role, required for rescue of stalled ribosomes mediated by trans-translation. Binds to transfer-messenger RNA (tmRNA), required for stable association of tmRNA with ribosomes. tmRNA and SmpB together mimic tRNA shape, replacing the anticodon stem-loop with SmpB. tmRNA is encoded by the ssrA gene; the 2 termini fold to resemble tRNA(Ala) and it encodes a 'tag peptide', a short internal open reading frame. During trans-translation Ala-aminoacylated tmRNA acts like a tRNA, entering the A-site of stalled ribosomes, displacing the stalled mRNA. The ribosome then switches to translate the ORF on the tmRNA; the nascent peptide is terminated with the 'tag peptide' encoded by the tmRNA and targeted for degradation. The ribosome is freed to recommence translation, which seems to be the essential function of trans-translation. This Coxiella burnetii (strain CbuK_Q154) (Coxiella burnetii (strain Q154)) protein is SsrA-binding protein.